The following is an 812-amino-acid chain: Phosphoenolpyruvate synthase (812 aa).

The Tele-phosphohistidine intermediate role is filled by His-430. Residues Arg-520, Arg-588, Glu-690, Gly-711, Ser-712, Asn-713, and Asp-714 each coordinate substrate. Glu-690 is a binding site for Mg(2+). Residue Asp-714 participates in Mg(2+) binding. Cys-761 functions as the Proton donor in the catalytic mechanism.

It belongs to the PEP-utilizing enzyme family. Mg(2+) serves as cofactor.

The enzyme catalyses pyruvate + ATP + H2O = phosphoenolpyruvate + AMP + phosphate + 2 H(+). Its pathway is carbohydrate biosynthesis; gluconeogenesis. Functionally, catalyzes the phosphorylation of pyruvate to phosphoenolpyruvate. The sequence is that of Phosphoenolpyruvate synthase (ppsA) from Helicobacter pylori (strain ATCC 700392 / 26695) (Campylobacter pylori).